Here is a 491-residue protein sequence, read N- to C-terminus: Cobyric acid synthase (491 aa).

The region spanning 250–439 (ELNIIVIRLP…LHGIFDNGSW (190 aa)) is the GATase cobBQ-type domain. Cysteine 331 acts as the Nucleophile in catalysis. Histidine 431 is an active-site residue.

The protein belongs to the CobB/CobQ family. CobQ subfamily.

It functions in the pathway cofactor biosynthesis; adenosylcobalamin biosynthesis. Catalyzes amidations at positions B, D, E, and G on adenosylcobyrinic A,C-diamide. NH(2) groups are provided by glutamine, and one molecule of ATP is hydrogenolyzed for each amidation. This Microcystis aeruginosa (strain NIES-843 / IAM M-2473) protein is Cobyric acid synthase.